The sequence spans 371 residues: F-box protein At2g41170 (371 aa).

The F-box domain maps to 56 to 102 (KMSLLDLPDLTLDCILEKLSPSELCAMTSVCSELRDKCVSDHLWEKH).

The protein is F-box protein At2g41170 of Arabidopsis thaliana (Mouse-ear cress).